Reading from the N-terminus, the 286-residue chain is Protein WVD2-like 1 (286 aa).

A disordered region spans residues 31–101; it reads ETDEEFEVKE…ENKKHIDDED (71 aa). A Phosphothreonine modification is found at T32. Basic and acidic residues predominate over residues 38–47; it reads VKECTEEKSL. Positions 131 to 182 form a coiled coil; that stretch reads AQRAEKRKEYYQKLEEKNQALEAERNELEQRQKDEQEAALKQLRKNLKFKAK. The segment at 186–286 is disordered; sequence NFYYEAPPAK…KPVNESSEEA (101 aa). The segment covering 234 to 247 has biased composition (polar residues); that stretch reads TVSNRNRHSTGTVQ.

This sequence belongs to the TPX2 family.

It is found in the cytoplasm. It localises to the cytoskeleton. Microtubule-associated protein (MAP) that regulates the orientation of interphase cortical microtubules. Modulates both rotational polarity and anisotropic cell expansion during organ growth. Promotes clockwise root and etiolated hypocotyls coiling, clockwise leaf curling, but left-handed petiole twisting. The sequence is that of Protein WVD2-like 1 (WDL1) from Arabidopsis thaliana (Mouse-ear cress).